The primary structure comprises 975 residues: Glycine dehydrogenase (decarboxylating) (975 aa).

N6-(pyridoxal phosphate)lysine is present on Lys723.

The protein belongs to the GcvP family. As to quaternary structure, the glycine cleavage system is composed of four proteins: P, T, L and H. Pyridoxal 5'-phosphate is required as a cofactor.

The enzyme catalyses N(6)-[(R)-lipoyl]-L-lysyl-[glycine-cleavage complex H protein] + glycine + H(+) = N(6)-[(R)-S(8)-aminomethyldihydrolipoyl]-L-lysyl-[glycine-cleavage complex H protein] + CO2. Its function is as follows. The glycine cleavage system catalyzes the degradation of glycine. The P protein binds the alpha-amino group of glycine through its pyridoxal phosphate cofactor; CO(2) is released and the remaining methylamine moiety is then transferred to the lipoamide cofactor of the H protein. This is Glycine dehydrogenase (decarboxylating) from Burkholderia thailandensis (strain ATCC 700388 / DSM 13276 / CCUG 48851 / CIP 106301 / E264).